The following is a 202-amino-acid chain: ATP-dependent Clp protease proteolytic subunit (202 aa).

Residue Ser106 is the Nucleophile of the active site. Residue His131 is part of the active site.

The protein belongs to the peptidase S14 family. Fourteen ClpP subunits assemble into 2 heptameric rings which stack back to back to give a disk-like structure with a central cavity, resembling the structure of eukaryotic proteasomes.

Its subcellular location is the cytoplasm. The catalysed reaction is Hydrolysis of proteins to small peptides in the presence of ATP and magnesium. alpha-casein is the usual test substrate. In the absence of ATP, only oligopeptides shorter than five residues are hydrolyzed (such as succinyl-Leu-Tyr-|-NHMec, and Leu-Tyr-Leu-|-Tyr-Trp, in which cleavage of the -Tyr-|-Leu- and -Tyr-|-Trp bonds also occurs).. Cleaves peptides in various proteins in a process that requires ATP hydrolysis. Has a chymotrypsin-like activity. Plays a major role in the degradation of misfolded proteins. This Shewanella baltica (strain OS223) protein is ATP-dependent Clp protease proteolytic subunit.